A 150-amino-acid polypeptide reads, in one-letter code: MSKLSQPATTPGVNGISVIHTQAHASGLQQVPQLVPAGPGGGGKAVPPSKQSKKSSPMDRNSDEYRQRRERNNMAVKKSRLKSKQKAQDTLQRVNQLKEENERLEAKIKLLTKELSVLKDLFLEHAHSLADNVQPISTETTATNSDNPGQ.

Lys3 participates in a covalent cross-link: Glycyl lysine isopeptide (Lys-Gly) (interchain with G-Cter in SUMO2). The tract at residues 27 to 94 (GLQQVPQLVP…QKAQDTLQRV (68 aa)) is disordered. Over residues 28–37 (LQQVPQLVPA) the composition is skewed to low complexity. Residues 56–72 (SPMDRNSDEYRQRRERN) show a composition bias toward basic and acidic residues. The 64-residue stretch at 62 to 125 (SDEYRQRRER…SVLKDLFLEH (64 aa)) folds into the bZIP domain. The segment at 66 to 93 (RQRRERNNMAVKKSRLKSKQKAQDTLQR) is basic motif. The leucine-zipper stretch occupies residues 97–118 (LKEENERLEAKIKLLTKELSVL). Positions 129-150 (LADNVQPISTETTATNSDNPGQ) are disordered. The span at 134 to 150 (QPISTETTATNSDNPGQ) shows a compositional bias: polar residues.

It belongs to the bZIP family. C/EBP subfamily. As to quaternary structure, binds DNA as a dimer and can form stable heterodimers with CEBPA. Can form stable heterodimers with CEBPB. Interacts with ZNF638; this interaction increases transcriptional activation. Ubiquitous.

Its subcellular location is the nucleus. Transcription factor that binds to the promoter and the enhancer regions of target genes. Binds to the promoter and the enhancer of the immunoglobulin heavy chain. Binds to GPE1, a cis-acting element in the G-CSF gene promoter. Binds to the enhancer element PRE-I (positive regulatory element-I) of the IL-4 gene. Binds to the promoter and the enhancer of the alpha-1-fetoprotein gene. The protein is CCAAT/enhancer-binding protein gamma (Cebpg) of Mus musculus (Mouse).